The primary structure comprises 388 residues: Flavin-dependent monooxygenase (388 aa).

Residues 12–15 (VGVA), 34–36 (EKS), 44–47 (QALD), R105, Y267, D289, and 296–302 (PLSGQGN) each bind FAD.

It belongs to the aromatic-ring hydroxylase family. Requires FAD as cofactor.

The enzyme catalyses a tetracycline + NADPH + O2 + H(+) = a (1S,10aS)-3-(CONH2)-1-(Me2N)-3,3a,4,6-(HO)4-2,5-dioxo-1H,10aH,11H,11aH-cyclopenta[b]anthracene + CO + NADP(+) + H2O. It carries out the reaction 7-chlorotetracycline + NADPH + O2 + H(+) = (1S,10S,10aS)-3-(CONH2)-9-Cl-1-(Me2N)-3,3a,4,10-(HO)4-10-Me-2,5-dioxo-1H,10aH,11H,11aH-cyclopenta[b]anthracen-6-olate + CO + NADP(+) + H2O. Its activity is regulated as follows. Inhibited by anhydrotetracycline. An FAD-requiring monooxygenase active on tetracycline antibiotic and some of its derivatives, which leads to their inactivation. Expression in E.coli confers high resistance to tetracycline and oxytetracycline, does not confer resistance to minocycline or tigecycline. Degrades tetracycline and oxytetracycline; the reaction requires NADPH. Degrades and confers resistance to chlortetracycline. In Unknown prokaryotic organism, this protein is Flavin-dependent monooxygenase (tet(50)).